Here is a 421-residue protein sequence, read N- to C-terminus: Phosphoribosylamine--glycine ligase (421 aa).

The region spanning 108-314 (KEIMVKYNVP…FAQNIDDIMM (207 aa)) is the ATP-grasp domain. An ATP-binding site is contributed by 134 to 195 (IEEQGAPIVV…EEFLDGEEFS (62 aa)). Residues E284 and N286 each contribute to the Mg(2+) site.

It belongs to the GARS family. Requires Mg(2+) as cofactor. The cofactor is Mn(2+).

The enzyme catalyses 5-phospho-beta-D-ribosylamine + glycine + ATP = N(1)-(5-phospho-beta-D-ribosyl)glycinamide + ADP + phosphate + H(+). It participates in purine metabolism; IMP biosynthesis via de novo pathway; N(1)-(5-phospho-D-ribosyl)glycinamide from 5-phospho-alpha-D-ribose 1-diphosphate: step 2/2. This is Phosphoribosylamine--glycine ligase from Streptococcus pyogenes serotype M18 (strain MGAS8232).